A 258-amino-acid chain; its full sequence is Lysine-rich coiled-coil protein 1 (258 aa).

Positions 142–258 (DNSTSTHQAS…MLWDQSILGF (117 aa)) are disordered. Residues 150–161 (ASHKQIHQKRKR) are compositionally biased toward basic residues. Composition is skewed to basic and acidic residues over residues 162 to 175 (HPEE…EEWS), 183 to 213 (CKEI…TEKL), and 220 to 232 (KGRD…EERK). The stretch at 211 to 248 (EKLKNRKEKKGRDVVSKKEERKRTKKKKEQGQERTEEE) forms a coiled coil.

This is Lysine-rich coiled-coil protein 1 (KRCC1) from Pongo abelii (Sumatran orangutan).